The sequence spans 401 residues: Beta-lactamase (401 aa).

An N-terminal signal peptide occupies residues Met-1–Ala-39. The Acyl-ester intermediate role is filled by Ser-102. The Proton acceptor role is filled by Tyr-188. A substrate-binding site is contributed by Lys-353 to Gly-355.

The protein belongs to the class-C beta-lactamase family.

It is found in the secreted. The enzyme catalyses a beta-lactam + H2O = a substituted beta-amino acid. Functionally, this protein is a serine beta-lactamase with a substrate specificity for cephalosporins. The polypeptide is Beta-lactamase (ampC) (Psychrobacter immobilis).